We begin with the raw amino-acid sequence, 141 residues long: UPF0102 protein BRADO0179 (141 aa).

Residues 1 to 24 form a disordered region; it reads MAETDRATDKPAGAPKPAKTASPE. Positions 10 to 19 are enriched in low complexity; it reads KPAGAPKPAK.

Belongs to the UPF0102 family.

This Bradyrhizobium sp. (strain ORS 278) protein is UPF0102 protein BRADO0179.